We begin with the raw amino-acid sequence, 225 residues long: Ribose-5-phosphate isomerase A (225 aa).

Substrate is bound by residues threonine 26–threonine 29, aspartate 82–aspartate 85, and lysine 95–glycine 98. Catalysis depends on glutamate 104, which acts as the Proton acceptor. Lysine 122 is a binding site for substrate.

It belongs to the ribose 5-phosphate isomerase family. As to quaternary structure, homodimer.

The enzyme catalyses aldehydo-D-ribose 5-phosphate = D-ribulose 5-phosphate. It participates in carbohydrate degradation; pentose phosphate pathway; D-ribose 5-phosphate from D-ribulose 5-phosphate (non-oxidative stage): step 1/1. Functionally, catalyzes the reversible conversion of ribose-5-phosphate to ribulose 5-phosphate. This is Ribose-5-phosphate isomerase A from Streptococcus gordonii (strain Challis / ATCC 35105 / BCRC 15272 / CH1 / DL1 / V288).